The primary structure comprises 831 residues: MDTRSLQDFQDLCTFDVFKSFGHYYGYGVDQQALIDQEFKRIKGVTYLDHAGTTLFPESLIKGFHDDISRNVYGNPHSHNSSSRLTHDTVESVRYKILAHFNTSPEDYSVIFTSGCTAALKLVADTFPWKPMSNKEPGSQFCYLTDNHTSVVGIRGATALQGVGTISVSPREVETRARNKTQTNGEEECSTPHLFCYPAQSNFSGRKYSLSYVKGIQSQQLYPACEHHGQWFVLLDAACFVSCSPLDLSQYPADFVPISFYKMFGFPTGLGALLVRNEAAEVLRKTYFGGGTAAAYLVEENYFIPKPNLASRFEDGTISFLDIISLHHGFETLQKLTGSMTNIQLHTFGLARYTYTVLSCLCHSNGKHVAQIYCDNDFQSIAEQGAIINFSLLDCHGRTVGYSQVDKMASLFNIHIRTGCFCNTGACQHYLAISNQNVKSNLHAGHICGDNIDLVDGRPTGSLRVSFGYMSSFEDCQNFLRFVVNCFVDKPLILDQTKLAKLNSAAPIEPSSSYSPSPDRMAVSEVTMSKDGKKDGSSCTLTNLFIFPVKSCASFEVTEWPLGPQGLLYDRLWMVVNENGVCLSQKREPKLCLIQPVVCLAANTLKLQISGSEAITVPLDPSLEKSDLRTSQSKVCGDRVQTVDCGEEVSAWLSEFLGKPCRLIRQRPEFLRDMKFGQGDCCPTPLSLVNEAQFLLINRASVCFLQEAIANRYNSDNEETWRDTEQLVQRFRANLVISAQEPFAEDNWSHLTIGNTQFQVIGKCGRCQMIGVDQKTATRTQEPLRSLSECRSGKVTFGVYLAHQSARNSTHPVLSIGSHVIPKISDSTDKF.

Lys262 is subject to N6-(pyridoxal phosphate)lysine. Cys422 is a catalytic residue. The MOSC domain maps to Ala651–Lys823.

It belongs to the class-V pyridoxal-phosphate-dependent aminotransferase family. MOCOS subfamily. Pyridoxal 5'-phosphate serves as cofactor.

It catalyses the reaction Mo-molybdopterin + L-cysteine + AH2 = thio-Mo-molybdopterin + L-alanine + A + H2O. It participates in cofactor biosynthesis; molybdopterin biosynthesis. Sulfurates the molybdenum cofactor. Sulfation of molybdenum is essential for xanthine dehydrogenase (XDH) and aldehyde oxidase (ADO) enzymes in which molybdenum cofactor is liganded by 1 oxygen and 1 sulfur atom in active form. In Danio rerio (Zebrafish), this protein is Molybdenum cofactor sulfurase (mocos).